Consider the following 301-residue polypeptide: Tyrosine recombinase XerD (301 aa).

The Core-binding (CB) domain maps to 7–90; it reads QFHTTILEQF…ALKVFFLFLK (84 aa). The 186-residue stretch at 109-294 folds into the Tyr recombinase domain; sequence RLPSVLTPQE…AADSLIEKFL (186 aa). Residues R153, K175, H246, R249, and H272 contribute to the active site. Y281 acts as the O-(3'-phospho-DNA)-tyrosine intermediate in catalysis.

Belongs to the 'phage' integrase family. XerD subfamily. In terms of assembly, forms a cyclic heterotetrameric complex composed of two molecules of XerC and two molecules of XerD.

It is found in the cytoplasm. Its function is as follows. Site-specific tyrosine recombinase, which acts by catalyzing the cutting and rejoining of the recombining DNA molecules. The XerC-XerD complex is essential to convert dimers of the bacterial chromosome into monomers to permit their segregation at cell division. It also contributes to the segregational stability of plasmids. This chain is Tyrosine recombinase XerD, found in Chlamydia pneumoniae (Chlamydophila pneumoniae).